A 232-amino-acid polypeptide reads, in one-letter code: MAPSLLGGFTKSLAMTVLSEIGDKTFFAAAILAMRYPRKLVLAGCLTSLTVMTALSVSLGWVAPNLISRKWTHHVTTLLFFVFGILSLWEGFKEDGDSEELAEVEAELDANFKSNKAESKSKSKANDDKKKQQRPFVLQFFSPIFIKAFSITFFGEWGDKSQIATIGLAADENPFGVVLGGVLAQALCTTAAVMGGKSLASQISEKMVGLSSGVLFLLFGIMSYLSGPEGEL.

The next 6 helical transmembrane spans lie at 13–33 (LAMTVLSEIGDKTFFAAAILA), 40–60 (LVLAGCLTSLTVMTALSVSLG), 72–92 (THHVTTLLFFVFGILSLWEGF), 135–155 (PFVLQFFSPIFIKAFSITFFG), 175–195 (FGVVLGGVLAQALCTTAAVMG), and 207–227 (MVGLSSGVLFLLFGIMSYLSG).

This sequence belongs to the GDT1 family.

It is found in the membrane. The sequence is that of GDT1-like protein 5 from Oryza sativa subsp. japonica (Rice).